A 383-amino-acid polypeptide reads, in one-letter code: Probable indole-3-pyruvate monooxygenase YUCCA10 (383 aa).

Residue 9–14 (GAGPAG) participates in FAD binding. NADP(+) is bound at residue 177–182 (GGGNSG).

This sequence belongs to the FMO family. FAD serves as cofactor.

The enzyme catalyses indole-3-pyruvate + NADPH + O2 + H(+) = (indol-3-yl)acetate + CO2 + NADP(+) + H2O. The protein operates within plant hormone metabolism; auxin biosynthesis. Involved in auxin biosynthesis. The protein is Probable indole-3-pyruvate monooxygenase YUCCA10 (YUC10) of Arabidopsis thaliana (Mouse-ear cress).